The following is a 630-amino-acid chain: A-type voltage-gated potassium channel KCND2 (630 aa).

Residues 1–184 (MAAGVAAWLP…FENPHTSTMA (184 aa)) lie on the Cytoplasmic side of the membrane. Residues 2 to 20 (AAGVAAWLPFARAAAIGWM) form an interaction with KCNIP1, KCNIP2, and other family members region. Phosphothreonine is present on T38. The interaction with KCNIP1 stretch occupies residues 71–90 (ERDFFYHPETQQYFFDRDPD). Residues H105, C111, C132, and C133 each contribute to the Zn(2+) site. The chain crosses the membrane as a helical span at residues 185-206 (LVFYYVTGFFIAVSVIANVVET). Over 207–226 (VPCGSSPGHIKELPCGERYA) the chain is Extracellular. Residues 227-249 (VAFFCLDTACVMIFTVEYLLRLA) traverse the membrane as a helical segment. Residues 250–256 (AAPSRYR) are Cytoplasmic-facing. A helical transmembrane segment spans residues 257-281 (FVRSVMSIIDVVAILPYYIGLVMTD). At 282–287 (NEDVSG) the chain is on the extracellular side. Residues 288–307 (AFVTLRVFRVFRIFKFSRHS) traverse the membrane as a helical; Voltage-sensor segment. The Cytoplasmic segment spans residues 308–321 (QGLRILGYTLKSCA). Residues 308–321 (QGLRILGYTLKSCA) form an S4-S5 linker region. Residues 322–345 (SELGFLLFSLTMAIIIFATVMFYA) form a helical membrane-spanning segment. Topologically, residues 346–357 (EKGSSASKFTSI) are extracellular. An intramembrane region (helical) is located at residues 358-369 (PAAFWYTIVTMT). K(+)-binding residues include T370, L371, G372, and Y373. Positions 370–375 (TLGYGD) match the Selectivity filter motif. An intramembrane segment occupies 370-377 (TLGYGDMV). The Extracellular portion of the chain corresponds to 378-380 (PKT). The chain crosses the membrane as a helical span at residues 381-403 (IAGKIFGSICSLSGVLVIALPVP). Residues 404–630 (VIVSNFSRIY…GGNIVRVSAL (227 aa)) lie on the Cytoplasmic side of the membrane. At S438 the chain carries Phosphoserine. The required for dendritic targeting stretch occupies residues 474 to 489 (FETQHHHLLHCLEKTT). Residues 474–630 (FETQHHHLLH…GGNIVRVSAL (157 aa)) are important for normal channel activation and inactivation, for interaction with KCNIP2, and probably other family members as well. Residues S548, S552, S572, and S575 each carry the phosphoserine modification. A disordered region spans residues 600–630 (IPTPPVTTPEGDDRPESPEYSGGNIVRVSAL). Residues T602 and T607 each carry the phosphothreonine modification. The residue at position 616 (S616) is a Phosphoserine. The short motif at 627 to 630 (VSAL) is the PDZ-binding element.

It belongs to the potassium channel family. D (Shal) (TC 1.A.1.2) subfamily. Kv4.2/KCND2 sub-subfamily. As to quaternary structure, homotetramer or heterotetramer with KCND1 or KCND3. Associates with the regulatory subunits KCNIP2, KCNIP3 and KCNIP4. Interacts with the regulatory subunit KCNIP1; this interaction mediates the capture of both the N- and C-terminus of KCND2, preventing N-type inactivation and stabilizing the S6 conformation, thereby accelerating closed state inactivation and recovery. In vivo, probably exists as heteromeric complex containing variable proportions of KCND1, KCND2, KCND3, KCNIP1, KCNIP2, KCNIP3, KCNIP4, DPP6 and DPP10. The tetrameric channel can associate with up to four regulatory subunits, such as KCNIP2 or KCNIP4. Interaction with four KCNIP4 chains does not reduce interaction with DPP10. Interacts with DLG4 and NCS1/FREQ. Interacts with DLG1. Probably part of a complex consisting of KCNIP1, KCNIP2 isoform 3 and KCND2. Interacts with FLNA, FLNC and DPP10. Interacts (via S1 and S2 helices) with DPP6; this interaction stabilizes the conformation of the S1-S2 helices and facilitates S4 conformational change, including S4 sliding up and down, thereby accelerating activation, inactivation, and recovery. Post-translationally, phosphorylation at Ser-438 in response to MAPK activation is increased in stimulated dendrites. Interaction with KCNIP2 and DPP6 propomtes phosphorylation by PKA at Ser-552. Phosphorylation at Ser-552 has no effect on interaction with KCNIP3, but is required for the regulation of channel activity by KCNIP3. Phosphorylation at Ser-552 leads to KCND2 internalization. Phosphorylated by MAPK in response to signaling via the metabotropic glutamate receptor GRM5. Phosphorylation at Ser-616 is required for the down-regulation of neuronal A-type currents in response to signaling via GRM5. As to expression, detected in ovary, in corpus luteum and in granulosa and theca cells in the follicle (at protein level). Highly expressed throughout the brain. Detected in amygdala, caudate nucleus, cerebellum, hippocampus, substantia nigra and thalamus. Expression is not detectable or very low in heart, kidney, liver, lung, pancreas and skeletal muscle. Not detectable in human heart atrium.

Its subcellular location is the cell membrane. It localises to the cell projection. The protein localises to the dendrite. The protein resides in the synapse. It is found in the perikaryon. Its subcellular location is the postsynaptic cell membrane. It localises to the dendritic spine. The protein localises to the cell junction. It catalyses the reaction K(+)(in) = K(+)(out). In terms of biological role, voltage-gated potassium channel that mediates transmembrane potassium transport in excitable membranes, primarily in the brain. Mediates the major part of the dendritic A-type current I(SA) in brain neurons. This current is activated at membrane potentials that are below the threshold for action potentials. It regulates neuronal excitability, prolongs the latency before the first spike in a series of action potentials, regulates the frequency of repetitive action potential firing, shortens the duration of action potentials and regulates the back-propagation of action potentials from the neuronal cell body to the dendrites. Contributes to the regulation of the circadian rhythm of action potential firing in suprachiasmatic nucleus neurons, which regulates the circadian rhythm of locomotor activity. Functions downstream of the metabotropic glutamate receptor GRM5 and plays a role in neuronal excitability and in nociception mediated by activation of GRM5. Mediates the transient outward current I(to) in rodent heart left ventricle apex cells, but not in human heart, where this current is mediated by another family member. Forms tetrameric potassium-selective channels through which potassium ions pass in accordance with their electrochemical gradient. The channel alternates between opened and closed conformations in response to the voltage difference across the membrane. Can form functional homotetrameric channels and heterotetrameric channels that contain variable proportions of KCND2 and KCND3; channel properties depend on the type of pore-forming alpha subunits that are part of the channel. In vivo, membranes probably contain a mixture of heteromeric potassium channel complexes. Interaction with specific isoforms of the regulatory subunits KCNIP1, KCNIP2, KCNIP3 or KCNIP4 strongly increases expression at the cell surface and thereby increases channel activity; it modulates the kinetics of channel activation and inactivation, shifts the threshold for channel activation to more negative voltage values, shifts the threshold for inactivation to less negative voltages and accelerates recovery after inactivation. Likewise, interaction with DPP6 or DPP10 promotes expression at the cell membrane and regulates both channel characteristics and activity. Upon depolarization, the channel goes from a resting closed state (C state) to an activated but non-conducting state (C* state), from there, the channel may either inactivate (I state) or open (O state). This is A-type voltage-gated potassium channel KCND2 from Homo sapiens (Human).